A 297-amino-acid polypeptide reads, in one-letter code: 4-diphosphocytidyl-2-C-methyl-D-erythritol kinase (297 aa).

Lysine 19 is a catalytic residue. Position 105 to 115 (proline 105 to alanine 115) interacts with ATP. The active site involves aspartate 147.

It belongs to the GHMP kinase family. IspE subfamily.

It carries out the reaction 4-CDP-2-C-methyl-D-erythritol + ATP = 4-CDP-2-C-methyl-D-erythritol 2-phosphate + ADP + H(+). It participates in isoprenoid biosynthesis; isopentenyl diphosphate biosynthesis via DXP pathway; isopentenyl diphosphate from 1-deoxy-D-xylulose 5-phosphate: step 3/6. Catalyzes the phosphorylation of the position 2 hydroxy group of 4-diphosphocytidyl-2C-methyl-D-erythritol. The protein is 4-diphosphocytidyl-2-C-methyl-D-erythritol kinase of Rhizobium etli (strain CIAT 652).